Reading from the N-terminus, the 365-residue chain is 5-hydroxytryptamine receptor 1E (365 aa).

Residues 1-22 (MNITNCTTDASMVVRPKTVTEK) are Extracellular-facing. Residues Asn-2 and Asn-5 are each glycosylated (N-linked (GlcNAc...) asparagine). A helical membrane pass occupies residues 23 to 47 (MLICMTLVIITTLTMLLNSAVIMAI). Residues 48–59 (CTTKKLHQPANY) are Cytoplasmic-facing. The chain crosses the membrane as a helical span at residues 60–82 (LICSLAVTDLLVAVLVMPLSIMY). The Extracellular portion of the chain corresponds to 83-96 (IVMDSWRLGYFICE). Cys-95 and Cys-173 are oxidised to a cystine. A helical membrane pass occupies residues 97–118 (VWLSVDMTCCTCSILHLCVIAL). Residues Asp-102 and Thr-107 each contribute to the ergotamine site. Positions 119 to 121 (DRY) match the DRY motif; important for ligand-induced conformation changes motif. Residues 119–138 (DRYWAITNAIEYARKRTAKR) are Cytoplasmic-facing. The helical transmembrane segment at 139 to 160 (AGLMILTVWTISIFISMPPLFW) threads the bilayer. Residues 161–179 (RSHRQLSPPPSQCTIQHDH) are Extracellular-facing. Ile-175 lines the ergotamine pocket. The helical transmembrane segment at 180–202 (VIYTIYSTFGAFYIPLTLILILY) threads the bilayer. Residues 203–291 (YRIYHAAKSL…SSTRERKAAR (89 aa)) are Cytoplasmic-facing. A helical membrane pass occupies residues 292-314 (ILGLILGAFILSWLPFFIKELIV). Residues 315 to 324 (GLSIYTVSSE) are Extracellular-facing. A helical transmembrane segment spans residues 325–347 (VGDFLTWLGYVNSLINPLLYTSF). The NPxxY motif; important for ligand-induced conformation changes and signaling motif lies at 340-344 (NPLLY). Residues 348–365 (NEDFKLAFKKLIRCREHT) lie on the Cytoplasmic side of the membrane.

Belongs to the G-protein coupled receptor 1 family. Detected in the brain with the greatest abundance in the hippocampus, followed by the olfactory bulb. Lower levels are detected in the cortex, thalamus, pons, hypothalamus, midbrain, striatum, and cerebellum.

The protein resides in the cell membrane. G-protein coupled receptor for 5-hydroxytryptamine (serotonin). Also functions as a receptor for various alkaloids and psychoactive substances. Ligand binding causes a conformation change that triggers signaling via guanine nucleotide-binding proteins (G proteins) and modulates the activity of down-stream effectors, such as adenylate cyclase. Signaling inhibits adenylate cyclase activity. This Cavia porcellus (Guinea pig) protein is 5-hydroxytryptamine receptor 1E (5HT1E).